The sequence spans 615 residues: Chaperone protein DnaK (615 aa).

Thr-175 is subject to Phosphothreonine; by autocatalysis. The disordered stretch occupies residues 573-615 (SQEMYQKAAQEQQAAQGAEQAQDNGPKDDNVVDADFKEVDEDK). The span at 580–594 (AAQEQQAAQGAEQAQ) shows a compositional bias: low complexity. A compositionally biased stretch (basic and acidic residues) spans 597-609 (GPKDDNVVDADFK).

This sequence belongs to the heat shock protein 70 family.

Its function is as follows. Acts as a chaperone. The chain is Chaperone protein DnaK from Clostridioides difficile (strain 630) (Peptoclostridium difficile).